A 291-amino-acid chain; its full sequence is Glycine--tRNA ligase alpha subunit (291 aa).

The protein belongs to the class-II aminoacyl-tRNA synthetase family. As to quaternary structure, tetramer of two alpha and two beta subunits.

Its subcellular location is the cytoplasm. It carries out the reaction tRNA(Gly) + glycine + ATP = glycyl-tRNA(Gly) + AMP + diphosphate. This Geobacter metallireducens (strain ATCC 53774 / DSM 7210 / GS-15) protein is Glycine--tRNA ligase alpha subunit.